The sequence spans 467 residues: Chromosomal replication initiator protein DnaA (467 aa).

Positions 1–80 are domain I, interacts with DnaA modulators; that stretch reads MTSELWHQCL…APRISLKIGS (80 aa). Positions 80 to 130 are domain II; the sequence is SITGNSKGQQASKDSAVGATRTTAPSRPVIADVAPSGERNVTVEGAIKHES. Residues 131–347 form a domain III, AAA+ region region; sequence YLNPTFTFET…GALKLVIANA (217 aa). Positions 175, 177, 178, and 179 each coordinate ATP. Residues 348-467 are domain IV, binds dsDNA; it reads HFTGQEITPA…YQNFMRMLTS (120 aa).

Belongs to the DnaA family. In terms of assembly, oligomerizes as a right-handed, spiral filament on DNA at oriC.

The protein localises to the cytoplasm. In terms of biological role, plays an essential role in the initiation and regulation of chromosomal replication. ATP-DnaA binds to the origin of replication (oriC) to initiate formation of the DNA replication initiation complex once per cell cycle. Binds the DnaA box (a 9 base pair repeat at the origin) and separates the double-stranded (ds)DNA. Forms a right-handed helical filament on oriC DNA; dsDNA binds to the exterior of the filament while single-stranded (ss)DNA is stabiized in the filament's interior. The ATP-DnaA-oriC complex binds and stabilizes one strand of the AT-rich DNA unwinding element (DUE), permitting loading of DNA polymerase. After initiation quickly degrades to an ADP-DnaA complex that is not apt for DNA replication. Binds acidic phospholipids. This chain is Chromosomal replication initiator protein DnaA, found in Hahella chejuensis (strain KCTC 2396).